A 159-amino-acid chain; its full sequence is Cyclic pyranopterin monophosphate synthase (159 aa).

Substrate is bound by residues 75-77 and 113-114; these read LCH and ME. Residue aspartate 128 is part of the active site.

Belongs to the MoaC family. Homohexamer; trimer of dimers.

The catalysed reaction is (8S)-3',8-cyclo-7,8-dihydroguanosine 5'-triphosphate = cyclic pyranopterin phosphate + diphosphate. The protein operates within cofactor biosynthesis; molybdopterin biosynthesis. In terms of biological role, catalyzes the conversion of (8S)-3',8-cyclo-7,8-dihydroguanosine 5'-triphosphate to cyclic pyranopterin monophosphate (cPMP). The polypeptide is Cyclic pyranopterin monophosphate synthase (Serratia proteamaculans (strain 568)).